Here is a 1180-residue protein sequence, read N- to C-terminus: RecBCD enzyme subunit RecB (1180 aa).

Residues 1–852 (MITTIPKSIN…QSGKNHISTK (852 aa)) are DNA-binding and helicase activity, interacts with RecC. The UvrD-like helicase ATP-binding domain maps to 3–448 (TTIPKSINVT…YFLDTNWRSS (446 aa)). An ATP-binding site is contributed by 24–31 (ASAGTGKT). Positions 478 to 745 (SSRINKTTKF…KIVSIHKSKG (268 aa)) constitute a UvrD-like helicase C-terminal domain. A nuclease activity, interacts with RecD and RecA region spans residues 905–1180 (NYNFTSYSQL…EIIKKLEQIF (276 aa)). Mg(2+)-binding residues include H964, D1075, and D1088. The active-site For nuclease activity is the D1088.

Belongs to the helicase family. UvrD subfamily. In terms of assembly, heterotrimer of RecB, RecC and RecD. All subunits contribute to DNA-binding. Interacts with RecA. Mg(2+) serves as cofactor.

The enzyme catalyses Exonucleolytic cleavage (in the presence of ATP) in either 5'- to 3'- or 3'- to 5'-direction to yield 5'-phosphooligonucleotides.. It catalyses the reaction Couples ATP hydrolysis with the unwinding of duplex DNA by translocating in the 3'-5' direction.. It carries out the reaction ATP + H2O = ADP + phosphate + H(+). A helicase/nuclease that prepares dsDNA breaks (DSB) for recombinational DNA repair. Binds to DSBs and unwinds DNA via a highly rapid and processive ATP-dependent bidirectional helicase activity. Unwinds dsDNA until it encounters a Chi (crossover hotspot instigator) sequence from the 3' direction. Cuts ssDNA a few nucleotides 3' to the Chi site. The properties and activities of the enzyme are changed at Chi. The Chi-altered holoenzyme produces a long 3'-ssDNA overhang and facilitates RecA-binding to the ssDNA for homologous DNA recombination and repair. Holoenzyme degrades any linearized DNA that is unable to undergo homologous recombination. In the holoenzyme this subunit contributes ATPase, 3'-5' helicase, exonuclease activity and loads RecA onto ssDNA. In Buchnera aphidicola subsp. Baizongia pistaciae (strain Bp), this protein is RecBCD enzyme subunit RecB.